Here is a 671-residue protein sequence, read N- to C-terminus: DNA ligase (671 aa).

Residues 32-36, 81-82, and Glu113 contribute to the NAD(+) site; these read DAEYD and SL. The N6-AMP-lysine intermediate role is filled by Lys115. 4 residues coordinate NAD(+): Arg136, Glu173, Lys290, and Lys314. The Zn(2+) site is built by Cys408, Cys411, Cys426, and Cys432. One can recognise a BRCT domain in the interval 593 to 671; sequence EIDSPFAGKT…EAEMLRLLGS (79 aa).

It belongs to the NAD-dependent DNA ligase family. LigA subfamily. The cofactor is Mg(2+). Mn(2+) serves as cofactor.

The enzyme catalyses NAD(+) + (deoxyribonucleotide)n-3'-hydroxyl + 5'-phospho-(deoxyribonucleotide)m = (deoxyribonucleotide)n+m + AMP + beta-nicotinamide D-nucleotide.. Its function is as follows. DNA ligase that catalyzes the formation of phosphodiester linkages between 5'-phosphoryl and 3'-hydroxyl groups in double-stranded DNA using NAD as a coenzyme and as the energy source for the reaction. It is essential for DNA replication and repair of damaged DNA. The polypeptide is DNA ligase (Escherichia coli O9:H4 (strain HS)).